Consider the following 205-residue polypeptide: Protein GrpE (205 aa).

Over residues 1–18 the composition is skewed to basic and acidic residues; it reads MSEEVKNSVETEENKASK. Positions 1–60 are disordered; that stretch reads MSEEVKNSVETEENKASKDNATQAPNPTENHNTAQETEKAENSEKTESATQENESLDKLK. Over residues 19–35 the composition is skewed to polar residues; the sequence is DNATQAPNPTENHNTAQ. Over residues 36-47 the composition is skewed to basic and acidic residues; it reads ETEKAENSEKTE.

It belongs to the GrpE family. As to quaternary structure, homodimer.

The protein localises to the cytoplasm. In terms of biological role, participates actively in the response to hyperosmotic and heat shock by preventing the aggregation of stress-denatured proteins, in association with DnaK and GrpE. It is the nucleotide exchange factor for DnaK and may function as a thermosensor. Unfolded proteins bind initially to DnaJ; upon interaction with the DnaJ-bound protein, DnaK hydrolyzes its bound ATP, resulting in the formation of a stable complex. GrpE releases ADP from DnaK; ATP binding to DnaK triggers the release of the substrate protein, thus completing the reaction cycle. Several rounds of ATP-dependent interactions between DnaJ, DnaK and GrpE are required for fully efficient folding. This Chloroherpeton thalassium (strain ATCC 35110 / GB-78) protein is Protein GrpE.